We begin with the raw amino-acid sequence, 337 residues long: tRNA N6-adenosine threonylcarbamoyltransferase (337 aa).

The Fe cation site is built by His-111 and His-115. Substrate-binding positions include 134-138, Asp-167, Gly-180, and Asn-272; that span reads LVSGG. Asp-300 is a binding site for Fe cation.

The protein belongs to the KAE1 / TsaD family. Fe(2+) serves as cofactor.

Its subcellular location is the cytoplasm. The enzyme catalyses L-threonylcarbamoyladenylate + adenosine(37) in tRNA = N(6)-L-threonylcarbamoyladenosine(37) in tRNA + AMP + H(+). Functionally, required for the formation of a threonylcarbamoyl group on adenosine at position 37 (t(6)A37) in tRNAs that read codons beginning with adenine. Is involved in the transfer of the threonylcarbamoyl moiety of threonylcarbamoyl-AMP (TC-AMP) to the N6 group of A37, together with TsaE and TsaB. TsaD likely plays a direct catalytic role in this reaction. This is tRNA N6-adenosine threonylcarbamoyltransferase from Salmonella typhi.